Consider the following 60-residue polypeptide: Large ribosomal subunit protein bL33 (60 aa).

Belongs to the bacterial ribosomal protein bL33 family.

The chain is Large ribosomal subunit protein bL33 from Pelodictyon phaeoclathratiforme (strain DSM 5477 / BU-1).